Consider the following 97-residue polypeptide: Large ribosomal subunit protein bL28 (97 aa).

The protein belongs to the bacterial ribosomal protein bL28 family.

This Bartonella henselae (strain ATCC 49882 / DSM 28221 / CCUG 30454 / Houston 1) (Rochalimaea henselae) protein is Large ribosomal subunit protein bL28.